Consider the following 137-residue polypeptide: Large ribosomal subunit protein uL16 (137 aa).

This sequence belongs to the universal ribosomal protein uL16 family. In terms of assembly, part of the 50S ribosomal subunit.

Its function is as follows. Binds 23S rRNA and is also seen to make contacts with the A and possibly P site tRNAs. The polypeptide is Large ribosomal subunit protein uL16 (Methylobacterium sp. (strain 4-46)).